A 264-amino-acid polypeptide reads, in one-letter code: MSDDVFTLGPAAFGSRLIMGTGGAPSLEVLERSLIASGTELTTVAMRRLDPTVQGSVLSVLERLSIRVLPNTAGCFTAGEAVLTARLAREALGTDWVKLEVVADERTLLPDPIELLDAAEVLVDDGFTVLPYTNDDPVLARKLEDVGCAAIMPLGSPIGSGLGIRNPHNFELIVERAGVPVILDAGAGTASDAAQAMELGCAAVMLASAVTRAQEPELMAGAMRHAVEGGRLAYRAGRIPRRHFAEASSPVAGRAVLDPERPAF.

Lys-98 serves as the catalytic Schiff-base intermediate with DXP. 1-deoxy-D-xylulose 5-phosphate is bound by residues Gly-159, 185–186 (AG), and 207–208 (AS).

The protein belongs to the ThiG family. In terms of assembly, homotetramer. Forms heterodimers with either ThiH or ThiS.

The protein resides in the cytoplasm. The catalysed reaction is [ThiS sulfur-carrier protein]-C-terminal-Gly-aminoethanethioate + 2-iminoacetate + 1-deoxy-D-xylulose 5-phosphate = [ThiS sulfur-carrier protein]-C-terminal Gly-Gly + 2-[(2R,5Z)-2-carboxy-4-methylthiazol-5(2H)-ylidene]ethyl phosphate + 2 H2O + H(+). It participates in cofactor biosynthesis; thiamine diphosphate biosynthesis. In terms of biological role, catalyzes the rearrangement of 1-deoxy-D-xylulose 5-phosphate (DXP) to produce the thiazole phosphate moiety of thiamine. Sulfur is provided by the thiocarboxylate moiety of the carrier protein ThiS. In vitro, sulfur can be provided by H(2)S. The polypeptide is Thiazole synthase (Streptomyces griseus subsp. griseus (strain JCM 4626 / CBS 651.72 / NBRC 13350 / KCC S-0626 / ISP 5235)).